A 635-amino-acid polypeptide reads, in one-letter code: Signal recognition particle subunit SRP72 (635 aa).

TPR repeat units lie at residues 7-42 (GGLYQCLTDISRADTSGDYQKALTSANKLIRKYPKE), 75-105 (GHVGFEKAYIHYRQDELDEAIKELNTCDKDD), 106-139 (VKALELKAQVFYKQENYQQAYDIYLYLLKNHSDD), 171-204 (YSQLYNRACVEIEAEKLPQALESLEKALKTCRKS), 220-253 (DSIRVQKAYVLQRMGQKAEALAIYEKVQAANHPD), 255-290 (SVKATITNNIPAASSDFALPESRKRFKAALQIDQTK), and 436-469 (VEVEQQRGNETAATKHLEKLVEKFPEDLQLQCRL). The interval 539-635 (KRKRKIRLPK…QKKKKNASKF (97 aa)) is disordered. A compositionally biased stretch (basic and acidic residues) spans 557-569 (DPERWLPRQERST). Residues 625-635 (KQKKKKNASKF) are compositionally biased toward basic residues.

This sequence belongs to the SRP72 family. Heterodimer with srpa-68. Srpa-68-srpa-72 heterodimer formation is stabilized by the presence of 7SL RNA. Component of a signal recognition particle (SRP) complex that consists of a 7SL RNA molecule of 300 nucleotides and six protein subunits: srpa-72, srpa-68, SRP54, F37F2.2/SRP19, F25G6.8/SRP14 and ZK512.4/SRP9. Within the SRP complex, interacts (via N-terminus) with srpa-68 (via C-terminus).

Its subcellular location is the cytoplasm. It localises to the endoplasmic reticulum. Functionally, component of the signal recognition particle (SRP) complex, a ribonucleoprotein complex that mediates the cotranslational targeting of secretory and membrane proteins to the endoplasmic reticulum (ER). The SRP complex interacts with the signal sequence in nascent secretory and membrane proteins and directs them to the membrane of the ER. The SRP complex targets the ribosome-nascent chain complex to the SRP receptor (SR), which is anchored in the ER, where SR compaction and GTPase rearrangement drive cotranslational protein translocation into the ER. Binds the signal recognition particle RNA (7SL RNA) in presence of srpa-68. Can bind 7SL RNA with low affinity. The SRP complex possibly participates in the elongation arrest function. The sequence is that of Signal recognition particle subunit SRP72 from Caenorhabditis elegans.